The sequence spans 778 residues: Aerobic respiration control sensor protein ArcB (778 aa).

The Cytoplasmic portion of the chain corresponds to 1–25 (MKQIRLLAQYYVDLMMKLGLVRFSM). Residues 26-46 (LLALALVVLAIVVQMAVTMVL) form a helical membrane-spanning segment. Over 47 to 57 (HGQVESIDVIR) the chain is Periplasmic. Residues 58–78 (SIFFGLLITPWAVYFLSVVVE) traverse the membrane as a helical segment. The Cytoplasmic segment spans residues 79 to 778 (QLEESRQRLS…KAWVAKATKK (700 aa)). The region spanning 153-223 (QSSFLRSFLD…ETDEKVFRHN (71 aa)) is the PAS domain. The PAC domain maps to 226–278 (LTYEQWLDYPDGRKACFEIRKVPYYDRVGKRHGLMGFGRDITERKRYQDALER). The 219-residue stretch at 289–507 (TISHELRTPL…TFTLTIHAPS (219 aa)) folds into the Histidine kinase domain. The residue at position 292 (His292) is a Phosphohistidine; by autocatalysis. The Response regulatory domain maps to 527–643 (NVLLVEDIEL…ALTAMIKKFW (117 aa)). Asp576 carries the 4-aspartylphosphate modification. An HPt domain is found at 678–771 (GPKLITDGLA…RHDVEVLKAW (94 aa)). Phosphohistidine is present on His717.

Post-translationally, activation requires a sequential transfer of a phosphate group from a His in the primary transmitter domain, to an Asp in the receiver domain and to a His in the secondary transmitter domain.

It localises to the cell inner membrane. It carries out the reaction ATP + protein L-histidine = ADP + protein N-phospho-L-histidine.. Its function is as follows. Member of the two-component regulatory system ArcB/ArcA. Sensor-regulator protein for anaerobic repression of the arc modulon. Activates ArcA via a four-step phosphorelay. ArcB can also dephosphorylate ArcA by a reverse phosphorelay involving His-717 and Asp-576. The sequence is that of Aerobic respiration control sensor protein ArcB (arcB) from Escherichia coli O157:H7.